The primary structure comprises 381 residues: L-lactate dehydrogenase (381 aa).

In terms of domain architecture, FMN hydroxy acid dehydrogenase spans 1-380 (MIISASTDYR…SRDSLVRELG (380 aa)). Tyrosine 24 serves as a coordination point for substrate. Residues serine 106 and glutamine 127 each coordinate FMN. Position 129 (tyrosine 129) interacts with substrate. Threonine 155 is a binding site for FMN. Arginine 164 lines the substrate pocket. Lysine 251 contributes to the FMN binding site. The active-site Proton acceptor is the histidine 275. A substrate-binding site is contributed by arginine 278. Residue 306–330 (DSGIRSGLDVVRMIALGADTVLIGR) participates in FMN binding.

The protein belongs to the FMN-dependent alpha-hydroxy acid dehydrogenase family. In terms of assembly, homotetramer. FMN serves as cofactor.

The protein resides in the cell inner membrane. The enzyme catalyses (S)-lactate + A = pyruvate + AH2. Its function is as follows. Catalyzes the conversion of L-lactate to pyruvate. Is coupled to the respiratory chain. This is L-lactate dehydrogenase from Pseudomonas putida (strain W619).